A 149-amino-acid chain; its full sequence is Calmodulin-6 (149 aa).

EF-hand domains lie at Asp-8–Asn-43, Pro-44–Asp-79, Asp-81–Lys-116, and Leu-117–Lys-149. 19 residues coordinate Ca(2+): Asp-21, Asp-23, Asp-25, Cys-27, Glu-32, Asp-57, Asp-59, Asn-61, Thr-63, Glu-68, Asp-94, Asp-96, Asn-98, Glu-105, Asp-130, Asp-132, Asp-134, Gln-136, and Glu-141.

This sequence belongs to the calmodulin family. Interacts with KCBP.

Its function is as follows. Calmodulin mediates the control of a large number of enzymes, ion channels and other proteins by Ca(2+). Among the enzymes to be stimulated by the calmodulin-Ca(2+) complex are a number of protein kinases and phosphatases. The chain is Calmodulin-6 (CAM6) from Arabidopsis thaliana (Mouse-ear cress).